The following is a 503-amino-acid chain: Maturase K (503 aa).

The protein belongs to the intron maturase 2 family. MatK subfamily.

Its subcellular location is the plastid. It localises to the chloroplast. Usually encoded in the trnK tRNA gene intron. Probably assists in splicing its own and other chloroplast group II introns. This is Maturase K from Rosa carolina (Pasture rose).